Consider the following 327-residue polypeptide: Zinc transport protein ZntB (327 aa).

Topologically, residues 1–273 are cytoplasmic; that stretch reads MEAIKGSEVN…SRRSYTMSLM (273 aa). The chain crosses the membrane as a helical span at residues 274-294; it reads AMVFLPSTFLTGLFGVNLGGI. Residues 295–300 lie on the Periplasmic side of the membrane; it reads PGGGWH. A helical membrane pass occupies residues 301–321; sequence LGFSVFCVALVLLIGGVTWWL. Over 322-327 the chain is Cytoplasmic; that stretch reads HRSKWL.

It belongs to the CorA metal ion transporter (MIT) (TC 1.A.35) family.

The protein localises to the cell inner membrane. It catalyses the reaction Zn(2+)(out) + H(+)(out) = Zn(2+)(in) + H(+)(in). Zinc transporter. Acts as a Zn(2+):proton symporter, which likely mediates zinc ion uptake. This is Zinc transport protein ZntB from Cronobacter sakazakii (strain ATCC BAA-894) (Enterobacter sakazakii).